A 305-amino-acid polypeptide reads, in one-letter code: UDP-3-O-acyl-N-acetylglucosamine deacetylase (305 aa).

Zn(2+) is bound by residues His78, His237, and Asp241. The active-site Proton donor is the His264.

This sequence belongs to the LpxC family. It depends on Zn(2+) as a cofactor.

The enzyme catalyses a UDP-3-O-[(3R)-3-hydroxyacyl]-N-acetyl-alpha-D-glucosamine + H2O = a UDP-3-O-[(3R)-3-hydroxyacyl]-alpha-D-glucosamine + acetate. It functions in the pathway glycolipid biosynthesis; lipid IV(A) biosynthesis; lipid IV(A) from (3R)-3-hydroxytetradecanoyl-[acyl-carrier-protein] and UDP-N-acetyl-alpha-D-glucosamine: step 2/6. Functionally, catalyzes the hydrolysis of UDP-3-O-myristoyl-N-acetylglucosamine to form UDP-3-O-myristoylglucosamine and acetate, the committed step in lipid A biosynthesis. The polypeptide is UDP-3-O-acyl-N-acetylglucosamine deacetylase (Cupriavidus pinatubonensis (strain JMP 134 / LMG 1197) (Cupriavidus necator (strain JMP 134))).